The sequence spans 637 residues: Chloride intracellular channel protein 6 (637 aa).

Residues 1–400 (MAETAEPEGG…EASEEGDPGQ (400 aa)) form a disordered region. The span at 35–63 (GPEASEGAAKAPSGEGAGAAAKAGATEEA) shows a compositional bias: low complexity. Ser39 carries the post-translational modification Phosphoserine. Positions 126-137 (CELRGEAAREAE) are enriched in basic and acidic residues. The segment covering 138–152 (GQAAAPAAPGAQEEA) has biased composition (low complexity). Repeat copies occupy residues 155–160 (GDSVDA), 161–166 (EGSIDA), 167–172 (GGSVDA), 173–178 (AGSVDA), 179–184 (GGSIDA), 185–190 (GGSMDA), 191–196 (GGSVDA), 197–202 (GGSIDT), 203–208 (GGSVDA), 209–214 (AGSVDA), 215–220 (GGSIDT), 221–226 (GRNVDA), 227–232 (GGSIDA), 233–238 (GGSVDA), and 239–244 (GGSMDA). The tract at residues 155–244 (GDSVDAEGSI…SVDAGGSMDA (90 aa)) is 15 X 6 AA tandem repeat of [GEA]-[DGR]-[SN]-[VIM]-D-[AT]. Residues 247 to 256 (PAGGAHGAGG) show a composition bias toward gly residues. Acidic residues predominate over residues 305–314 (GSEDAAGEDG). The span at 315–332 (DQGRPQEETEQQAERQEP) shows a compositional bias: basic and acidic residues. Ser348 and Ser393 each carry phosphoserine. A G-site motif is present at residues 420–423 (CPFS). Residues 422 to 442 (FSQRLFMILWLKGVIFNVTTV) form a helical membrane-spanning segment. Positions 466–637 (DGDVKTDVNK…AYSDVAKRMK (172 aa)) constitute a GST C-terminal domain.

This sequence belongs to the chloride channel CLIC family. Monomer (soluble state). Interacts with dopamine receptors DRD2, DRD3 and DRD4. Phosphorylated. Expressed in brain, chorioretinal, lacrimal glands, submandibular glands, airway epithelium, kidney and gastric mucosa, where it is preferentially expressed in cells that secrete or transport water. In brain, it is highly expressed in choroid plexus. Not detected in pancreas, adrenal glands, heart, skeletal muscle, ileal mucosa, liver and lung.

It localises to the cytoplasm. The protein localises to the cell membrane. The catalysed reaction is chloride(in) = chloride(out). Channel activity is redox- and pH-regulated. Inhibited by IAA-94. In the soluble state, catalyzes glutaredoxin-like thiol disulfide exchange reactions with reduced glutathione as electron donor. Can insert into membranes and form voltage-dependent chloride-selective channels. The channel opens upon membrane depolarization at positive voltages and closes at negative membrane voltages. May play a critical role in water-secreting cells, possibly through the regulation of chloride ion transport. The protein is Chloride intracellular channel protein 6 (CLIC6) of Oryctolagus cuniculus (Rabbit).